Reading from the N-terminus, the 758-residue chain is 5-methyltetrahydropteroyltriglutamate--homocysteine methyltransferase (758 aa).

5-methyltetrahydropteroyltri-L-glutamate-binding positions include 17-20 (RELK) and Lys-117. L-homocysteine is bound by residues 434–436 (IGS) and Glu-487. L-methionine is bound by residues 434-436 (IGS) and Glu-487. Residues 518–519 (RC) and Trp-564 each bind 5-methyltetrahydropteroyltri-L-glutamate. Position 602 (Asp-602) interacts with L-homocysteine. Residue Asp-602 participates in L-methionine binding. Position 608 (Glu-608) interacts with 5-methyltetrahydropteroyltri-L-glutamate. 3 residues coordinate Zn(2+): His-644, Cys-646, and Glu-668. His-697 functions as the Proton donor in the catalytic mechanism. Cys-729 provides a ligand contact to Zn(2+).

Belongs to the vitamin-B12 independent methionine synthase family. Zn(2+) serves as cofactor.

The enzyme catalyses 5-methyltetrahydropteroyltri-L-glutamate + L-homocysteine = tetrahydropteroyltri-L-glutamate + L-methionine. Its pathway is amino-acid biosynthesis; L-methionine biosynthesis via de novo pathway; L-methionine from L-homocysteine (MetE route): step 1/1. Its function is as follows. Catalyzes the transfer of a methyl group from 5-methyltetrahydrofolate to homocysteine resulting in methionine formation. The sequence is that of 5-methyltetrahydropteroyltriglutamate--homocysteine methyltransferase from Yersinia pseudotuberculosis serotype O:1b (strain IP 31758).